The sequence spans 371 residues: Aspartate-semialdehyde dehydrogenase (371 aa).

NADP(+) contacts are provided by residues 10–13, 37–38, and Gln-74; these read RGMV and TS. Residue Arg-103 participates in phosphate binding. Residue Cys-136 is the Acyl-thioester intermediate of the active site. Gln-163 provides a ligand contact to substrate. Ser-166 contributes to the NADP(+) binding site. Glu-243 contacts substrate. Lys-246 provides a ligand contact to phosphate. Arg-270 lines the substrate pocket. His-277 acts as the Proton acceptor in catalysis. An NADP(+)-binding site is contributed by Gln-353.

This sequence belongs to the aspartate-semialdehyde dehydrogenase family. As to quaternary structure, homodimer.

The enzyme catalyses L-aspartate 4-semialdehyde + phosphate + NADP(+) = 4-phospho-L-aspartate + NADPH + H(+). Its pathway is amino-acid biosynthesis; L-lysine biosynthesis via DAP pathway; (S)-tetrahydrodipicolinate from L-aspartate: step 2/4. It functions in the pathway amino-acid biosynthesis; L-methionine biosynthesis via de novo pathway; L-homoserine from L-aspartate: step 2/3. The protein operates within amino-acid biosynthesis; L-threonine biosynthesis; L-threonine from L-aspartate: step 2/5. In terms of biological role, catalyzes the NADPH-dependent formation of L-aspartate-semialdehyde (L-ASA) by the reductive dephosphorylation of L-aspartyl-4-phosphate. The sequence is that of Aspartate-semialdehyde dehydrogenase from Haemophilus influenzae (strain ATCC 51907 / DSM 11121 / KW20 / Rd).